A 105-amino-acid chain; its full sequence is Flowering-promoting factor 1-like protein 5 (105 aa).

It belongs to the FPF1 family.

This is Flowering-promoting factor 1-like protein 5 from Oryza sativa subsp. japonica (Rice).